Consider the following 440-residue polypeptide: Transposon TyH3 Gag polyprotein (440 aa).

3 stretches are compositionally biased toward polar residues: residues 1–23 (MESQQLSQHSPNSHGSACASVTS), 48–60 (TKANSQQTTTPAS), and 127–152 (QSQFPQYPSSVGTPLSTPSPESGNTF). Disordered regions lie at residues 1–93 (MESQ…MMTQ), 126–173 (PQSQ…RPPP), and 352–440 (GSRN…PETY). Positions 153-165 (TDSSSADSDMTST) are enriched in low complexity. The segment at 299–401 (NNGIHINNKV…NSKSKTARAH (103 aa)) is RNA-binding. The segment covering 402 to 418 (NVSTSNNSPSTDNDSIS) has biased composition (low complexity). Serine 416 carries the post-translational modification Phosphoserine. Polar residues predominate over residues 419 to 428 (KSTTEPIQLN). A compositionally biased stretch (basic and acidic residues) spans 429–440 (NKHDLHLRPETY).

Homotrimer.

It is found in the cytoplasm. Functionally, capsid protein (CA) is the structural component of the virus-like particle (VLP), forming the shell that encapsulates the retrotransposons dimeric RNA genome. The particles are assembled from trimer-clustered units and there are holes in the capsid shells that allow for the diffusion of macromolecules. CA also has nucleocapsid-like chaperone activity, promoting primer tRNA(i)-Met annealing to the multipartite primer-binding site (PBS), dimerization of Ty1 RNA and initiation of reverse transcription. This is Transposon TyH3 Gag polyprotein (TY1A) from Saccharomyces cerevisiae (Baker's yeast).